Here is a 306-residue protein sequence, read N- to C-terminus: MNFGRVLTAMVTPFTDEGELNYDEAARLADYLATHGSDGLVVCGTTGESPTLTWQEEYELFRVVRDAVAGRAKVIAGTGSNSTREAIEATKKAAQLGLDGSLQVVPYYNKPTQAGLYEHFKAIAQASDLPILLYNIPSRTGASLQPETVAQLAELETVVAIKEASGMMDVASEIRRLTPSRFAIYSGDDSLTLPLLSLGGSGVVSVASHLVGLQLQELIQSYIRGQHDQALAHHLRLFPLFKVLFIETNPVPIKAALEMQGWRVGRARLPLAPLQPSSLQVLRQVLEEMGLLAESKGSEQMATKVS.

Threonine 46 is a binding site for pyruvate. The active-site Proton donor/acceptor is the tyrosine 134. The active-site Schiff-base intermediate with substrate is lysine 162. Valine 204 lines the pyruvate pocket.

Belongs to the DapA family. As to quaternary structure, homotetramer; dimer of dimers.

The protein localises to the cytoplasm. The catalysed reaction is L-aspartate 4-semialdehyde + pyruvate = (2S,4S)-4-hydroxy-2,3,4,5-tetrahydrodipicolinate + H2O + H(+). Its pathway is amino-acid biosynthesis; L-lysine biosynthesis via DAP pathway; (S)-tetrahydrodipicolinate from L-aspartate: step 3/4. Catalyzes the condensation of (S)-aspartate-beta-semialdehyde [(S)-ASA] and pyruvate to 4-hydroxy-tetrahydrodipicolinate (HTPA). The chain is 4-hydroxy-tetrahydrodipicolinate synthase from Synechococcus sp. (strain JA-2-3B'a(2-13)) (Cyanobacteria bacterium Yellowstone B-Prime).